The following is a 719-amino-acid chain: DNA replication licensing factor MCM7 (719 aa).

Alanine 2 carries the N-acetylalanine modification. Glycyl lysine isopeptide (Lys-Gly) (interchain with G-Cter in SUMO2) cross-links involve residues lysine 15 and lysine 28. Serine 314 carries the post-translational modification Phosphoserine. The 207-residue stretch at 332-538 folds into the MCM domain; the sequence is FYEKLAASIA…NDLRLAQHIT (207 aa). An ATP-binding site is contributed by tyrosine 345. Serine 365 carries the phosphoserine modification. 5 residues coordinate ATP: glycine 384, alanine 386, lysine 387, serine 388, and asparagine 489. Serine 500 is subject to Phosphoserine. Residues 513–516 carry the Arginine finger motif; it reads SRFD. Residue arginine 514 coordinates ATP. Residues 521 to 564 form an interaction with RAD17 region; sequence IQDRPDRDNDLRLAQHITYVHQHSRQPPAQFEPLDMKLMRRYIA. The interval 577 to 719 is interaction with ATRIP; that stretch reads LADYITAAYV…NTSRTRITFV (143 aa). Arginine 604 serves as a coordination point for ATP. Serine 678 is subject to Phosphoserine.

This sequence belongs to the MCM family. As to quaternary structure, component of the MCM2-7 complex. The complex forms a toroidal hexameric ring with the proposed subunit order MCM2-MCM6-MCM4-MCM7-MCM3-MCM5. Component of the CMG helicase complex, a hexameric ring of related MCM2-7 subunits stabilized by CDC45 and the tetrameric GINS complex. Interacts with the ATR-ATRIP complex and with RAD17. Interacts with TIPIN. Interacts with MCMBP. Interacts with ANKRD17. Component of the replisome complex composed of at least DONSON, MCM2, MCM7, PCNA and TICRR. In terms of processing, O-glycosylated (O-GlcNAcylated), in a cell cycle-dependent manner. Ubiquitinated by ECS(LRR1) E3 ubiquitin-protein ligase complex when forks converge following formation of DNA interstrand cross-links. During mitosis, ubiquitinated by TRAIP when forks converge following formation of DNA interstrand cross-links. Short ubiquitin chains on MCM7 promote recruitment of DNA glycosylase NEIL3. If the interstrand cross-link cannot be cleaved by NEIL3, the ubiquitin chains continue to grow on MCM7, promoting the unloading of the CMG helicase complex by the VCP/p97 ATPase.

It localises to the nucleus. It is found in the chromosome. It carries out the reaction ATP + H2O = ADP + phosphate + H(+). Acts as a component of the MCM2-7 complex (MCM complex) which is the replicative helicase essential for 'once per cell cycle' DNA replication initiation and elongation in eukaryotic cells. Core component of CDC45-MCM-GINS (CMG) helicase, the molecular machine that unwinds template DNA during replication, and around which the replisome is built. The active ATPase sites in the MCM2-7 ring are formed through the interaction surfaces of two neighboring subunits such that a critical structure of a conserved arginine finger motif is provided in trans relative to the ATP-binding site of the Walker A box of the adjacent subunit. The six ATPase active sites, however, are likely to contribute differentially to the complex helicase activity. Uncomplexed form does not show ATPase or DNA helicase. Required for S-phase checkpoint activation upon UV-induced damage. The protein is DNA replication licensing factor MCM7 (Mcm7) of Mus musculus (Mouse).